Here is a 350-residue protein sequence, read N- to C-terminus: Protein RecA (350 aa).

ATP is bound at residue 66-73 (GPESSGKT).

Belongs to the RecA family.

Its subcellular location is the cytoplasm. Functionally, can catalyze the hydrolysis of ATP in the presence of single-stranded DNA, the ATP-dependent uptake of single-stranded DNA by duplex DNA, and the ATP-dependent hybridization of homologous single-stranded DNAs. It interacts with LexA causing its activation and leading to its autocatalytic cleavage. In Nocardioides sp. (strain ATCC BAA-499 / JS614), this protein is Protein RecA.